The following is a 1243-amino-acid chain: Membrane-associated phosphatidylinositol transfer protein 1 (1243 aa).

3 positions are modified to phosphothreonine: Thr59, Thr282, and Thr287. The segment at 259–330 (CNTGSEGPEA…HGGGVSPQSL (72 aa)) is disordered. Over residues 271–283 (PGKSSTEARPGTS) the composition is skewed to polar residues. The span at 299 to 319 (ASPDASFGKQWSSSSRSSYSS) shows a compositional bias: low complexity. A phosphoserine mark is found at Ser300, Ser304, Ser319, Ser326, Ser329, Ser342, Ser345, Ser346, and Ser373. Ser382 is subject to Phosphoserine; by CDK1. A compositionally biased stretch (low complexity) spans 581-593 (AGPGSRGSSRRGS). A disordered region spans residues 581-679 (AGPGSRGSSR…PASSEAPDGP (99 aa)). Residues Ser593, Ser600, and Ser621 each carry the phosphoserine modification. The span at 643–658 (GSQNSLQVASTATSSG) shows a compositional bias: polar residues. The region spanning 684–878 (RLDFKVSGFF…VVAFILRQVI (195 aa)) is the DDHD domain. The residue at position 895 (Ser895) is a Phosphoserine. The disordered stretch occupies residues 1206-1243 (LLRSRGPSQVDREGPGTPPTTLARGKTRSISLKLDSEE). 2 positions are modified to omega-N-methylarginine: Arg1210 and Arg1217. Ser1236 carries the phosphoserine modification.

It belongs to the PtdIns transfer protein family. PI transfer class IIA subfamily. Interacts with PTK2B via its C-terminus. Interacts with RHOA. Has higher affinity for the inactive, GDP-bound form of RHOA. The CDK1-phosphorylated form interacts with PLK1. Interacts with VAPB and PIK4CA. Post-translationally, phosphorylated on multiple sites by CDK1 at the onset of mitosis. Phosphorylation facilitates dissociation from the Golgi complex and is required for interaction with PLK1. In terms of processing, phosphorylated on threonine residues upon treatment with oleic acid. Phosphorylated on tyrosine residues by PTK2B. In terms of tissue distribution, detected at high levels in brain, and at lower levels in lung, kidney, spleen and liver (at protein level). Ubiquitous. Highly expressed in embryonic retina and the central nervous system.

The protein localises to the cytoplasm. It is found in the golgi apparatus. Its subcellular location is the golgi stack membrane. The protein resides in the endoplasmic reticulum membrane. It localises to the lipid droplet. The protein localises to the cleavage furrow. It is found in the midbody. It carries out the reaction a 1,2-diacyl-sn-glycero-3-phospho-(1D-myo-inositol)(in) = a 1,2-diacyl-sn-glycero-3-phospho-(1D-myo-inositol)(out). In terms of biological role, catalyzes the transfer of phosphatidylinositol (PI) between membranes. Binds PI. Also binds phosphatidylcholine (PC) and phosphatidic acid (PA) with the binding affinity order of PI &gt; PA &gt; PC. Regulates RHOA activity, and plays a role in cytoskeleton remodeling. Necessary for normal completion of cytokinesis. Plays a role in maintaining normal diacylglycerol levels in the Golgi apparatus. Necessary for maintaining the normal structure of the endoplasmic reticulum and the Golgi apparatus. Required for protein export from the endoplasmic reticulum and the Golgi. Binds calcium ions. This chain is Membrane-associated phosphatidylinositol transfer protein 1 (Pitpnm1), found in Mus musculus (Mouse).